The sequence spans 252 residues: MSGHSKFKNIQHRKGAQDKKKSKVFTKLIREIVTAVKTGASNVPENNPRLRKALNAARSQNLPKERIDKAINSANDASNTESYTEIRYEGYAPNGIAIIIEALTDNKNRTASEVRSSFTKYGGILGETGSVNYLFNHCGVIQYPINIASNEDIFEAAIEAGGNDIISNDFAHTIYTDIENFYKALGFLTDKYGIPEDSYIGWIPVNTIIIDDKEKAKKLLKLIEVLEENDDVQRVFGNYMLSEDVYEIIQEE.

The tract at residues 1–22 (MSGHSKFKNIQHRKGAQDKKKS) is disordered.

Belongs to the TACO1 family.

The protein resides in the cytoplasm. The sequence is that of Probable transcriptional regulatory protein RT0442 from Rickettsia typhi (strain ATCC VR-144 / Wilmington).